The chain runs to 394 residues: 8-amino-7-oxononanoate synthase (394 aa).

Arg-21 contacts substrate. Residue 112-113 participates in pyridoxal 5'-phosphate binding; sequence GY. Position 137 (His-137) interacts with substrate. Ser-183, His-211, and Thr-239 together coordinate pyridoxal 5'-phosphate. Lys-242 bears the N6-(pyridoxal phosphate)lysine mark. Thr-358 is a binding site for substrate.

It belongs to the class-II pyridoxal-phosphate-dependent aminotransferase family. BioF subfamily. Homodimer. It depends on pyridoxal 5'-phosphate as a cofactor.

The enzyme catalyses 6-carboxyhexanoyl-[ACP] + L-alanine + H(+) = (8S)-8-amino-7-oxononanoate + holo-[ACP] + CO2. It functions in the pathway cofactor biosynthesis; biotin biosynthesis. Functionally, catalyzes the decarboxylative condensation of pimeloyl-[acyl-carrier protein] and L-alanine to produce 8-amino-7-oxononanoate (AON), [acyl-carrier protein], and carbon dioxide. The polypeptide is 8-amino-7-oxononanoate synthase (Burkholderia pseudomallei (strain 1710b)).